Reading from the N-terminus, the 245-residue chain is UDP-2,3-diacylglucosamine hydrolase (245 aa).

Mn(2+) is bound by residues Asp8, His10, Asp41, Asn79, and His114. Asn79–Arg80 contacts substrate. The substrate site is built by Asp122, Ser160, Lys164, Lys167, and His195. Mn(2+)-binding residues include His195 and His197.

This sequence belongs to the LpxH family. Requires Mn(2+) as cofactor.

Its subcellular location is the cell inner membrane. It carries out the reaction UDP-2-N,3-O-bis[(3R)-3-hydroxytetradecanoyl]-alpha-D-glucosamine + H2O = 2-N,3-O-bis[(3R)-3-hydroxytetradecanoyl]-alpha-D-glucosaminyl 1-phosphate + UMP + 2 H(+). Its pathway is glycolipid biosynthesis; lipid IV(A) biosynthesis; lipid IV(A) from (3R)-3-hydroxytetradecanoyl-[acyl-carrier-protein] and UDP-N-acetyl-alpha-D-glucosamine: step 4/6. Hydrolyzes the pyrophosphate bond of UDP-2,3-diacylglucosamine to yield 2,3-diacylglucosamine 1-phosphate (lipid X) and UMP by catalyzing the attack of water at the alpha-P atom. Involved in the biosynthesis of lipid A, a phosphorylated glycolipid that anchors the lipopolysaccharide to the outer membrane of the cell. This Aromatoleum aromaticum (strain DSM 19018 / LMG 30748 / EbN1) (Azoarcus sp. (strain EbN1)) protein is UDP-2,3-diacylglucosamine hydrolase.